The primary structure comprises 402 residues: Multidrug resistance protein MdtH (402 aa).

Topologically, residues 1 to 12 (MSRVSQARNLGK) are cytoplasmic. The chain crosses the membrane as a helical span at residues 13–33 (YFLLIDNMLVVLGFFVVFPLI). Residues 34–98 (SIRFVDQMGW…GFATMGIAHE (65 aa)) are Periplasmic-facing. Residues 99–116 (PWLLWFSCLLSGLGGTLF) form a helical membrane-spanning segment. At 117 to 138 (DPPRSALVVKLIRPQQRGRFFS) the chain is on the cytoplasmic side. Residues 139–159 (LLMMQDSAGAVIGALLGSWLL) traverse the membrane as a helical segment. Over 160 to 164 (QYDFR) the chain is Periplasmic. Residues 165-185 (LVCATGAVLFVLCAAFNAWLL) form a helical membrane-spanning segment. The Cytoplasmic segment spans residues 186-213 (PAWKLSTVRTPVREGMTRVMRDKRFVTY). The chain crosses the membrane as a helical span at residues 214-234 (VLTLAGYYMLAVQVMLMLPIM). At 235–243 (VNDVAGAPS) the chain is on the periplasmic side. Residues 244-264 (AVKWMYAIEACLSLTLLYPIA) form a helical membrane-spanning segment. Topologically, residues 265 to 276 (RWSEKHFRLEHR) are cytoplasmic. A helical transmembrane segment spans residues 277 to 297 (LMAGLLIMSLSMMPVGMVSGL). Over 298–299 (QQ) the chain is Periplasmic. Residues 300–320 (LFTLICLFYIGSIIAEPARET) traverse the membrane as a helical segment. The Cytoplasmic portion of the chain corresponds to 321–339 (LSASLADARARGSYMGFSR). A helical membrane pass occupies residues 340–360 (LGLAIGGAIGYIGGGWLFDLG). The Periplasmic portion of the chain corresponds to 361 to 367 (KSAHQPE). A helical transmembrane segment spans residues 368–388 (LPWMMLGIIGIFTFLALGWQF). Topologically, residues 389-402 (SQKRTARRLLERDA) are cytoplasmic.

It belongs to the major facilitator superfamily. DHA1 family. MdtH (TC 2.A.1.2.21) subfamily.

The protein resides in the cell inner membrane. In terms of biological role, confers resistance to norfloxacin and enoxacin. The polypeptide is Multidrug resistance protein MdtH (Escherichia coli O7:K1 (strain IAI39 / ExPEC)).